A 65-amino-acid chain; its full sequence is Large ribosomal subunit protein bL35 (65 aa).

The tract at residues Met1–Phe22 is disordered. Residues Ala10 to Phe22 are compositionally biased toward basic residues.

This sequence belongs to the bacterial ribosomal protein bL35 family.

The sequence is that of Large ribosomal subunit protein bL35 from Escherichia coli O127:H6 (strain E2348/69 / EPEC).